The primary structure comprises 513 residues: MEEYEAQLLVVEQALENAADDAQRQELLALKNNLQELLALTRDTGDEAPTDELPQQGNDLDDELQRLKSELSALEAAGSSQTALDEERQLADLRTKYTAMVGEKCSAPHEHSWGTCYHNALICGVDDEVVINSEGVLDARLRVLFTNPTHREMLPCSYYLEGECRFDEAKCRFSHGALVTGSSIRKYNPPDFHKLSRSRPVFALLPDRLWHRGRVLCVNFVEQVCRVRLDGQDHKERERDFKFEELYPLTTDQDEDDELSSEESTSSMRDASSDEAESDMDDLEEARRARMVELSLFTYKPTDRLGAWEEFTRGIGSKLMEKMGYIHGTGLGSDGRGIVTPVSAQILPQGRSLDACMELREAANGDKDYFSVERKLKRAQRRQRKADEKAYVRESQRVDVFTFLNDRVLGPGESTQQSEQVAKKAKTNELQQHSTKTLNVETVRIADEIRRKQRDMAKVKQSLERNSGDAQLQKRLQVQMQSHKQELATLQAQERSLSKEQQTRKSKNKMFEF.

A C3H1-type zinc finger spans residues Pro155–Leu178. 2 stretches are compositionally biased toward acidic residues: residues Asp252–Ser261 and Ser273–Leu283. A disordered region spans residues Asp252 to Leu283. A G-patch domain is found at Thr312–Glu358. The segment covering Gln477–Arg495 has biased composition (polar residues). The tract at residues Gln477 to Phe513 is disordered. Residues Ser496 to Phe513 show a composition bias toward basic and acidic residues.

The protein localises to the nucleus. In terms of biological role, transcription repressor. The polypeptide is Zinc finger CCCH-type with G patch domain-containing protein (Drosophila simulans (Fruit fly)).